The following is a 240-amino-acid chain: 2,3-bisphosphoglycerate-dependent phosphoglycerate mutase (240 aa).

Residues 5-12 (RHGESVWN), 18-19 (TG), Arg57, 84-87 (ERHY), Lys95, 111-112 (RR), and 180-181 (GN) each bind substrate. The active-site Tele-phosphohistidine intermediate is the His6. Catalysis depends on Glu84, which acts as the Proton donor/acceptor.

This sequence belongs to the phosphoglycerate mutase family. BPG-dependent PGAM subfamily. Homodimer.

The enzyme catalyses (2R)-2-phosphoglycerate = (2R)-3-phosphoglycerate. Its pathway is carbohydrate degradation; glycolysis; pyruvate from D-glyceraldehyde 3-phosphate: step 3/5. In terms of biological role, catalyzes the interconversion of 2-phosphoglycerate and 3-phosphoglycerate. This chain is 2,3-bisphosphoglycerate-dependent phosphoglycerate mutase, found in Nitrosococcus oceani (strain ATCC 19707 / BCRC 17464 / JCM 30415 / NCIMB 11848 / C-107).